The primary structure comprises 216 residues: Imidazole glycerol phosphate synthase subunit HisH (216 aa).

The region spanning Ser-2–Pro-216 is the Glutamine amidotransferase type-1 domain. Cys-88 (nucleophile) is an active-site residue. Catalysis depends on residues His-196 and Glu-198.

In terms of assembly, heterodimer of HisH and HisF.

Its subcellular location is the cytoplasm. It catalyses the reaction 5-[(5-phospho-1-deoxy-D-ribulos-1-ylimino)methylamino]-1-(5-phospho-beta-D-ribosyl)imidazole-4-carboxamide + L-glutamine = D-erythro-1-(imidazol-4-yl)glycerol 3-phosphate + 5-amino-1-(5-phospho-beta-D-ribosyl)imidazole-4-carboxamide + L-glutamate + H(+). The catalysed reaction is L-glutamine + H2O = L-glutamate + NH4(+). Its pathway is amino-acid biosynthesis; L-histidine biosynthesis; L-histidine from 5-phospho-alpha-D-ribose 1-diphosphate: step 5/9. IGPS catalyzes the conversion of PRFAR and glutamine to IGP, AICAR and glutamate. The HisH subunit catalyzes the hydrolysis of glutamine to glutamate and ammonia as part of the synthesis of IGP and AICAR. The resulting ammonia molecule is channeled to the active site of HisF. The sequence is that of Imidazole glycerol phosphate synthase subunit HisH from Rhodopseudomonas palustris (strain ATCC BAA-98 / CGA009).